A 379-amino-acid chain; its full sequence is Sensor histidine kinase YhcY (379 aa).

The Histidine kinase domain maps to 185–373 (RLAQELHDSV…KLSIRLPLKS (189 aa)). Histidine 191 is subject to Phosphohistidine; by autocatalysis.

The catalysed reaction is ATP + protein L-histidine = ADP + protein N-phospho-L-histidine.. Member of the two-component regulatory system YhcY/YhcZ. Probably activates YhcZ by phosphorylation. The polypeptide is Sensor histidine kinase YhcY (yhcY) (Bacillus subtilis (strain 168)).